We begin with the raw amino-acid sequence, 179 residues long: UPF0398 protein Bsph_0756 (179 aa).

Belongs to the UPF0398 family.

In Lysinibacillus sphaericus (strain C3-41), this protein is UPF0398 protein Bsph_0756.